Consider the following 90-residue polypeptide: Small ribosomal subunit protein bS16 (90 aa).

The protein belongs to the bacterial ribosomal protein bS16 family.

This chain is Small ribosomal subunit protein bS16, found in Streptococcus pneumoniae (strain Hungary19A-6).